Consider the following 495-residue polypeptide: Probable aspartic-type endopeptidase OPSB (495 aa).

The N-terminal stretch at 1–19 (MRGDSFIWSLATAIPLLST) is a signal peptide. The region spanning 73–408 (YFCNLTLGTP…DLDNNEISIA (336 aa)) is the Peptidase A1 domain. A glycan (N-linked (GlcNAc...) asparagine) is linked at Asn76. Asp91 is a catalytic residue. The N-linked (GlcNAc...) asparagine glycan is linked to Asn136. Asp290 is an active-site residue. N-linked (GlcNAc...) asparagine glycosylation occurs at Asn413. Residues 447–470 (ATGLPGVETGVPGSRPPSSKAAGQ) form a disordered region. The GPI-anchor amidated alanine moiety is linked to residue Ala467. The propeptide at 468–495 (AGQAKRPDFVLGVAAVGLAGAGMLFAAM) is removed in mature form.

Belongs to the peptidase A1 family.

It is found in the cell membrane. Functionally, probable GPI-anchored aspartic-type endopeptidase which contributes to virulence. This is Probable aspartic-type endopeptidase OPSB (OPSB) from Arthroderma benhamiae (strain ATCC MYA-4681 / CBS 112371) (Trichophyton mentagrophytes).